The chain runs to 203 residues: Peptidyl-tRNA hydrolase (203 aa).

Tyr-14 serves as a coordination point for tRNA. His-19 functions as the Proton acceptor in the catalytic mechanism. Residues Tyr-64, Asn-66, and Asn-112 each contribute to the tRNA site.

The protein belongs to the PTH family. In terms of assembly, monomer.

It is found in the cytoplasm. It carries out the reaction an N-acyl-L-alpha-aminoacyl-tRNA + H2O = an N-acyl-L-amino acid + a tRNA + H(+). Hydrolyzes ribosome-free peptidyl-tRNAs (with 1 or more amino acids incorporated), which drop off the ribosome during protein synthesis, or as a result of ribosome stalling. In terms of biological role, catalyzes the release of premature peptidyl moieties from peptidyl-tRNA molecules trapped in stalled 50S ribosomal subunits, and thus maintains levels of free tRNAs and 50S ribosomes. The sequence is that of Peptidyl-tRNA hydrolase from Methylobacterium nodulans (strain LMG 21967 / CNCM I-2342 / ORS 2060).